We begin with the raw amino-acid sequence, 1314 residues long: SWI/SNF chromatin-remodeling complex subunit SWI1 (1314 aa).

Low complexity-rich tracts occupy residues 1–65, 88–112, and 213–235; these read MDFF…NTNT, SNNN…STNF, and ISQN…ANQQ. 4 disordered regions span residues 1-112, 213-250, 262-321, and 355-384; these read MDFF…STNF, ISQN…GNLT, NSMD…STSN, and QNQQ…RQQQ. The interval 1-323 is prion domain (PrD); sequence MDFFNLNNNN…NTNNSTSNAN (323 aa). Positions 236-250 are enriched in polar residues; sequence FLPFNNSASNNGNLT. The ARID domain occupies 406-493; that stretch reads NKQYELFMKS…ILLPYERHMI (88 aa). The span at 581–592 shows a compositional bias: low complexity; sequence NVNNNNIGQQQV. Residues 581-617 are disordered; sequence NVNNNNIGQQQVKKPRKQRVKKKTKKELELERKERED. The segment covering 593-605 has biased composition (basic residues); the sequence is KKPRKQRVKKKTK. Over residues 606 to 617 the composition is skewed to basic and acidic residues; it reads KELELERKERED. Residues 1241-1258 form a C4-type zinc finger; the sequence is CVQLIKCLVEKSICFENC.

It belongs to the SWI1 family. In terms of assembly, component of the SWI/SNF global transcription activator complex. The 1.14 MDa SWI/SNF complex is composed of 11 different subunits: one copy each of SWI1, SNF2/SWI2, SNF5, SNF12/SWP73, ARP7/SWP61, ARP9/SWP59; two copies each of SWI3, SNF6, SNF11, SWP82; and three copies of TAF14/SWP29.

The protein resides in the nucleus. Functionally, involved in transcriptional activation. Component of the SWI/SNF complex, an ATP-dependent chromatin remodeling complex, which is required for the positive and negative regulation of gene expression of a large number of genes. It changes chromatin structure by altering DNA-histone contacts within a nucleosome, leading eventually to a change in nucleosome position, thus facilitating or repressing binding of gene-specific transcription factors. The sequence is that of SWI/SNF chromatin-remodeling complex subunit SWI1 (SWI1) from Saccharomyces cerevisiae (strain ATCC 204508 / S288c) (Baker's yeast).